Reading from the N-terminus, the 258-residue chain is tRNA (guanine-N(7)-)-methyltransferase (258 aa).

Positions 1–42 are disordered; it reads MPETPLMRDNGPVNHADQDAPAVPEEGQTKDSKGSRLHPRVT. Positions 90, 115, 142, and 165 each coordinate S-adenosyl-L-methionine. D165 is a catalytic residue. Substrate is bound by residues K169, D201, and 235-238; that span reads TKFE.

It belongs to the class I-like SAM-binding methyltransferase superfamily. TrmB family.

It catalyses the reaction guanosine(46) in tRNA + S-adenosyl-L-methionine = N(7)-methylguanosine(46) in tRNA + S-adenosyl-L-homocysteine. Its pathway is tRNA modification; N(7)-methylguanine-tRNA biosynthesis. Functionally, catalyzes the formation of N(7)-methylguanine at position 46 (m7G46) in tRNA. The sequence is that of tRNA (guanine-N(7)-)-methyltransferase from Rhodococcus jostii (strain RHA1).